The chain runs to 505 residues: Putative thymidine phosphorylase (505 aa).

This sequence belongs to the thymidine/pyrimidine-nucleoside phosphorylase family. Type 2 subfamily.

The enzyme catalyses thymidine + phosphate = 2-deoxy-alpha-D-ribose 1-phosphate + thymine. The polypeptide is Putative thymidine phosphorylase (Tolumonas auensis (strain DSM 9187 / NBRC 110442 / TA 4)).